We begin with the raw amino-acid sequence, 252 residues long: Ribosomal RNA small subunit methyltransferase J (252 aa).

Residues 126–127 (ER) and Asp-176 contribute to the S-adenosyl-L-methionine site.

The protein belongs to the methyltransferase superfamily. RsmJ family.

It localises to the cytoplasm. The catalysed reaction is guanosine(1516) in 16S rRNA + S-adenosyl-L-methionine = N(2)-methylguanosine(1516) in 16S rRNA + S-adenosyl-L-homocysteine + H(+). Specifically methylates the guanosine in position 1516 of 16S rRNA. This is Ribosomal RNA small subunit methyltransferase J from Bdellovibrio bacteriovorus (strain ATCC 15356 / DSM 50701 / NCIMB 9529 / HD100).